Consider the following 76-residue polypeptide: MNKALFLSLVVLCAAVVFAAEDLQKAKHAPFKLAAPCFCSGKPGRGDLWIFRGTCPGGYGYTSNCYKWPNICCYPH.

Positions 1-19 (MNKALFLSLVVLCAAVVFA) are cleaved as a signal peptide. Positions 20 to 33 (AEDLQKAKHAPFKL) are excised as a propeptide. 3 disulfides stabilise this stretch: C37/C72, C39/C65, and C55/C73.

Belongs to the sea anemone type 3 (BDS) potassium channel toxin family. As to expression, experimental results show no expression in the ectodermal tissue from the distal and proximal tentacles, body wall, and oral disk. Since paralogs are expressed in this tissue, an expression of this toxin in this tissue is probable. The negative results could be explained by the very low abundance of EST sequences.

The protein localises to the secreted. The protein resides in the nematocyst. Its function is as follows. Blocks Kv3 voltage-gated potassium channels. Reduces blood pressure. The chain is Kappa-actitoxin-Avd4o from Anemonia viridis (Snakelocks anemone).